Here is a 357-residue protein sequence, read N- to C-terminus: Ribosomal RNA large subunit methyltransferase M (357 aa).

Residues S190, 223–226 (APGG), D242, D262, and D278 each bind S-adenosyl-L-methionine. K307 acts as the Proton acceptor in catalysis.

Belongs to the class I-like SAM-binding methyltransferase superfamily. RNA methyltransferase RlmE family. RlmM subfamily. As to quaternary structure, monomer.

It is found in the cytoplasm. It catalyses the reaction cytidine(2498) in 23S rRNA + S-adenosyl-L-methionine = 2'-O-methylcytidine(2498) in 23S rRNA + S-adenosyl-L-homocysteine + H(+). Catalyzes the 2'-O-methylation at nucleotide C2498 in 23S rRNA. This chain is Ribosomal RNA large subunit methyltransferase M, found in Chromohalobacter salexigens (strain ATCC BAA-138 / DSM 3043 / CIP 106854 / NCIMB 13768 / 1H11).